Consider the following 268-residue polypeptide: Homeobox protein Hox-D12 (268 aa).

The interval 102 to 124 (TPDAPTASEERSRTRPPFAPESS) is disordered. A DNA-binding region (homeobox) is located at residues 200 to 259 (ARKKRKPYTKQQIAELENEFLVNEFINRQKRKELSNRLNLSDQQVKIWFQNRRMKKKRVV).

It belongs to the Abd-B homeobox family.

It is found in the nucleus. Its function is as follows. Sequence-specific transcription factor which is part of a developmental regulatory system that provides cells with specific positional identities on the anterior-posterior axis. The protein is Homeobox protein Hox-D12 (Hoxd12) of Mus musculus (Mouse).